The sequence spans 327 residues: Endochitinase CH5B (327 aa).

The first 26 residues, 1 to 26, serve as a signal peptide directing secretion; it reads MKKNRMMIMICSVGVVWMLLVGGSYG. A Chitin-binding type-1 domain is found at 27–67; the sequence is EQCGRQAGGALCPGGNCCSQFGWCGSTTDYCGKDCQSQCGG. 7 disulfide bridges follow: cysteine 29/cysteine 44, cysteine 38/cysteine 50, cysteine 43/cysteine 57, cysteine 61/cysteine 65, cysteine 96/cysteine 158, cysteine 169/cysteine 177, and cysteine 276/cysteine 308. Residue glutamate 140 is the Proton donor of the active site. A propeptide spans 317-327 (removed in mature form); that stretch reads SLFLSDLVTSQ.

Belongs to the glycosyl hydrolase 19 family. Chitinase class I subfamily.

It is found in the vacuole. It carries out the reaction Random endo-hydrolysis of N-acetyl-beta-D-glucosaminide (1-&gt;4)-beta-linkages in chitin and chitodextrins.. In terms of biological role, defense against chitin-containing fungal pathogens. The polypeptide is Endochitinase CH5B (Phaseolus vulgaris (Kidney bean)).